A 419-amino-acid chain; its full sequence is Acetyltransferase fsoF (419 aa).

N-linked (GlcNAc...) asparagine glycosylation occurs at Asn2. The next 2 membrane-spanning stretches (helical) occupy residues 4 to 24 and 62 to 82; these read TIISLALIFFQLTTTALVVGF and AFLGAASVFLVILYVDAAILS. The segment at 89 to 114 is disordered; the sequence is QSPTSSLGGLIPPTTRDTPKTQNNAT. N-linked (GlcNAc...) asparagine glycans are attached at residues Asn112 and Asn169. The next 4 helical transmembrane spans lie at 230–250, 314–334, 337–357, and 386–406; these read YWAIQYAVIDLLYSLLAVVAV, YVFMTLVFAVSGVFHTLSDVS, IPLGESGAMRFFVLQAIGIML, and VSGPVWLVTWLTWTSPGWIYM.

This sequence belongs to the wax synthase family.

It localises to the membrane. It carries out the reaction 3-O-(beta-D-glucopyranosyl)-2alpha-hydroxyisomotiol + acetyl-CoA = 3-O-(beta-D-glucopyranosyl)-2alpha-acetoxyisomotiol + CoA. The enzyme catalyses 2-deacetylfuscoatroside + acetyl-CoA = fuscoatroside + CoA. It functions in the pathway secondary metabolite biosynthesis; terpenoid biosynthesis. Functionally, terpene cyclase-glycosyl transferase fusion protein; part of the gene cluster that mediates the biosynthesis of the enfumafungin-type antibiotic, fuscoatroside. Within the pathway, fsoF catalyzes the acetylation of C2-alpha-OH following the C2 hydroxylation by the cytochrome monooxygenase fsoD. The fuscoatroside biosynthesis is initiated by the cyclization of 2,3(S)-oxidosqualene through FsoA's terpene cyclase (TC) domain, leading to the formation of the fernane skeleton isomotiol, harboring a fernane triterpene skeleton with a C8-C9 double bond. Subsequently, C2-alpha-hydroxylation mediated by fsoD results in the production of 2-alpha-hydroxy-isomotiol, which is further acetylated by fsoF. The glycosyltransferase (GT) domain of FsoA may convert isomotiol, 2-alpha-hydroxy-isomotiol, and the acetylated derivative of 2-alpha-hydroxy-isomotiol into their corresponding glycosides 3-O-(beta-D-glucopyranosyl)-isomotiol, 3-O-(beta-D-glucopyranosyl)-2-alpha-hydroxy-isomotiol, and 3-O-(beta-D-glucopyranosyl)-2-alpha-acetoxy-isomotiol, which then undergo oxidative cleavage under the action of fsoE to form s 2-deacetoxy-fuscoatroside, 2-deacetyl-fuscoatroside, and fuscoatroside, respectively. Although hydroxylation followed by acetylation of 3-O-(beta-D-glucopyranosyl)-isomotiol and 2-deacetoxy-fuscoatroside by fsoD and fsoF could not be ruled out, this process is likely to occur with difficulty due to bulky steric hindrance caused by the presence of a glycan at C3 in these compounds. Interestingly, fsoE can also utilize the aglycones isomotiol and 2-alpha-hydroxy-isomotiol as substrates to generate 19-beta-hydroxy-isomotiol and 2-alpha,19-beta-dihydroxy-isomotiol, respectively. These reactions occur with lower efficiency. Finally, fsoE can further convert 2-alpha,19-beta-dihydroxy-isomotiol into 2-alpha-hydroxy-ismotiol-19-one and 2-alpha-hydroxy-ismotiol-19-one into 2-deacetyl-3-deglucopyranosyl-fuscoatroside. The sequence is that of Acetyltransferase fsoF from Humicola fuscoatra.